A 466-amino-acid chain; its full sequence is Ribulose bisphosphate carboxylase large chain (466 aa).

K5 carries the N6,N6,N6-trimethyllysine modification. Residues N114 and T164 each contribute to the substrate site. K166 functions as the Proton acceptor in the catalytic mechanism. K168 lines the substrate pocket. Mg(2+)-binding residues include K192, D194, and E195. K192 carries the N6-carboxylysine modification. H285 serves as the catalytic Proton acceptor. Substrate is bound by residues R286, H318, and S370.

The protein belongs to the RuBisCO large chain family. Type I subfamily. In terms of assembly, heterohexadecamer of 8 large chains and 8 small chains; disulfide-linked. The disulfide link is formed within the large subunit homodimers. Requires Mg(2+) as cofactor. In terms of processing, the disulfide bond which can form in the large chain dimeric partners within the hexadecamer appears to be associated with oxidative stress and protein turnover.

Its subcellular location is the plastid. It localises to the chloroplast. The catalysed reaction is 2 (2R)-3-phosphoglycerate + 2 H(+) = D-ribulose 1,5-bisphosphate + CO2 + H2O. It carries out the reaction D-ribulose 1,5-bisphosphate + O2 = 2-phosphoglycolate + (2R)-3-phosphoglycerate + 2 H(+). In terms of biological role, ruBisCO catalyzes two reactions: the carboxylation of D-ribulose 1,5-bisphosphate, the primary event in carbon dioxide fixation, as well as the oxidative fragmentation of the pentose substrate in the photorespiration process. Both reactions occur simultaneously and in competition at the same active site. This chain is Ribulose bisphosphate carboxylase large chain, found in Eremothamnus marlothianus.